The following is a 1424-amino-acid chain: DNA-directed RNA polymerase subunit beta' (1424 aa).

4 residues coordinate Zn(2+): Cys-60, Cys-62, Cys-75, and Cys-78. Asp-449, Asp-451, and Asp-453 together coordinate Mg(2+). The Zn(2+) site is built by Cys-783, Cys-857, Cys-864, and Cys-867.

The protein belongs to the RNA polymerase beta' chain family. In terms of assembly, the RNAP catalytic core consists of 2 alpha, 1 beta, 1 beta' and 1 omega subunit. When a sigma factor is associated with the core the holoenzyme is formed, which can initiate transcription. Mg(2+) serves as cofactor. It depends on Zn(2+) as a cofactor.

It catalyses the reaction RNA(n) + a ribonucleoside 5'-triphosphate = RNA(n+1) + diphosphate. DNA-dependent RNA polymerase catalyzes the transcription of DNA into RNA using the four ribonucleoside triphosphates as substrates. This chain is DNA-directed RNA polymerase subunit beta', found in Treponema denticola (strain ATCC 35405 / DSM 14222 / CIP 103919 / JCM 8153 / KCTC 15104).